We begin with the raw amino-acid sequence, 147 residues long: MVHFTAEEKSTILSLWGKVNVEEAGGEALGRLLVVYPWTQRFFDSFGNLSSASAIMGNPKVKAHGKKVLTSFGEAVKNMDNLKGAFAKLSELHCDKLHVDPENFKLLGNVMVIILATHFGKEFTPDVQAAWQKLVSGVATALAHKYH.

A Globin domain is found at 3–147 (HFTAEEKSTI…VATALAHKYH (145 aa)). Phosphoserine occurs at positions 14 and 51. The heme b site is built by His64 and His93.

Belongs to the globin family. In terms of assembly, heterotetramer of two alpha chains and two epsilon chains in early embryonic hemoglobin Gower-2; two zeta chains and two epsilon chains in early embryonic hemoglobin Gower-1. Red blood cells.

In terms of biological role, the epsilon chain is a beta-type chain of early mammalian embryonic hemoglobin. The protein is Hemoglobin subunit epsilon (HBE1) of Cheirogaleus medius (Fat-tailed dwarf lemur).